Here is a 246-residue protein sequence, read N- to C-terminus: AA9 family lytic polysaccharide monooxygenase D (246 aa).

The N-terminal stretch at 1 to 19 (MHLLSLLFPVIALIPTVLS) is a signal peptide. His-20 lines the Cu(2+) pocket. Cys-78 and Cys-196 are joined by a disulfide. N-linked (GlcNAc...) asparagine glycosylation is found at Asn-86, Asn-141, and Asn-156. 2 residues coordinate O2: His-182 and Gln-191. Cu(2+) is bound at residue Tyr-193. An N-linked (GlcNAc...) asparagine glycan is attached at Asn-235.

Belongs to the polysaccharide monooxygenase AA9 family. Cu(2+) serves as cofactor.

The protein localises to the secreted. It carries out the reaction [(1-&gt;4)-beta-D-glucosyl]n+m + reduced acceptor + O2 = 4-dehydro-beta-D-glucosyl-[(1-&gt;4)-beta-D-glucosyl]n-1 + [(1-&gt;4)-beta-D-glucosyl]m + acceptor + H2O.. In terms of biological role, lytic polysaccharide monooxygenase (LPMO) that depolymerizes crystalline and amorphous polysaccharides via the oxidation of scissile alpha- or beta-(1-4)-glycosidic bonds, yielding C1 and C4 oxidation products. Catalysis by LPMOs requires the reduction of the active-site copper from Cu(II) to Cu(I) by a reducing agent and H(2)O(2) or O(2) as a cosubstrate. The protein is AA9 family lytic polysaccharide monooxygenase D of Botryotinia fuckeliana (strain B05.10) (Noble rot fungus).